The primary structure comprises 191 residues: Salivary lipocalin (191 aa).

Positions 1-16 (MKLLLLLCLGLTLASS) are cleaved as a signal peptide. N-linked (GlcNAc...) asparagine glycosylation is present at Asn-69. Cys-84 and Cys-176 form a disulfide bridge.

This sequence belongs to the calycin superfamily. Lipocalin family. Homodimer. As to expression, in the submaxillary salivary glands of mature male pigs, but absent from that of females. Expression was much lower in submaxillary glands of castrated male pigs than in sexually mature individuals.

It is found in the secreted. Binds pheromones, the pheromones are released from the saliva of males and affect the sexual behavior of females. The protein is Salivary lipocalin (SAL1) of Sus scrofa (Pig).